We begin with the raw amino-acid sequence, 245 residues long: MKIIFNADDFGISPGAVYGILESYRRGVVKSTTLLANSPAFDLAVEVAKENPGLDIGAHLTLTFGYPLLQGLETLTDDNGRFRKNYTALESGLANVDMEEVERELTAQIEKILGAGITISHFDTHHSIEPLIYPVQHKLAEKYGVSIRRHSDVSDFGAIKTPDLFDTSFYADGVSFETIKKIVQEHIGTNDVVEVMTHPAYIDETLREISSYVEPRIKEVSILTSRELQAYLGQQEVEIISFRDL.

The Mg(2+) site is built by H59 and H125.

It belongs to the YdjC deacetylase family. Homodimer. Mg(2+) serves as cofactor.

In terms of biological role, probably catalyzes the deacetylation of acetylated carbohydrates an important step in the degradation of oligosaccharides. The chain is Carbohydrate deacetylase 1 from Listeria innocua serovar 6a (strain ATCC BAA-680 / CLIP 11262).